The sequence spans 536 residues: CTP synthase (536 aa).

The segment at 1–267 is amidoligase domain; it reads MTKFIFVTGG…DDIVIKRLQL (267 aa). CTP is bound at residue serine 13. Serine 13 lines the UTP pocket. 14 to 19 contacts ATP; the sequence is SLGKGI. Tyrosine 54 lines the L-glutamine pocket. Residue aspartate 71 participates in ATP binding. 2 residues coordinate Mg(2+): aspartate 71 and glutamate 141. CTP is bound by residues 148-150, 188-193, and lysine 224; these read DIE and KTKPTQ. UTP is bound by residues 188–193 and lysine 224; that span reads KTKPTQ. ATP is bound at residue 240 to 242; the sequence is RDA. Residues 293 to 535 enclose the Glutamine amidotransferase type-1 domain; the sequence is TIGLVGKYVS…IEASLKYQQN (243 aa). Glycine 355 is a binding site for L-glutamine. Cysteine 382 acts as the Nucleophile; for glutamine hydrolysis in catalysis. L-glutamine contacts are provided by residues 383-386, glutamate 406, and arginine 463; that span reads LGMQ. Residues histidine 508 and glutamate 510 contribute to the active site.

It belongs to the CTP synthase family. Homotetramer.

It carries out the reaction UTP + L-glutamine + ATP + H2O = CTP + L-glutamate + ADP + phosphate + 2 H(+). The catalysed reaction is L-glutamine + H2O = L-glutamate + NH4(+). The enzyme catalyses UTP + NH4(+) + ATP = CTP + ADP + phosphate + 2 H(+). Its pathway is pyrimidine metabolism; CTP biosynthesis via de novo pathway; CTP from UDP: step 2/2. Its activity is regulated as follows. Allosterically activated by GTP, when glutamine is the substrate; GTP has no effect on the reaction when ammonia is the substrate. The allosteric effector GTP functions by stabilizing the protein conformation that binds the tetrahedral intermediate(s) formed during glutamine hydrolysis. Inhibited by the product CTP, via allosteric rather than competitive inhibition. Catalyzes the ATP-dependent amination of UTP to CTP with either L-glutamine or ammonia as the source of nitrogen. Regulates intracellular CTP levels through interactions with the four ribonucleotide triphosphates. The sequence is that of CTP synthase from Staphylococcus aureus (strain NCTC 8325 / PS 47).